The chain runs to 245 residues: Neurovirulence factor ICP34.5 (245 aa).

Basic residues predominate over residues 1 to 15 (MARRRRRHRGPRRPR). The segment at 1 to 17 (MARRRRRHRGPRRPRPP) is required for nucleolar localization. 2 disordered regions span residues 1–122 (MARR…PFRL) and 143–172 (RRAGGEGAPKPPATPATPATPATPATPATP). The span at 25 to 36 (TAQSQVTSTPNS) shows a compositional bias: polar residues. The segment covering 67–77 (ASDDDDDDDWP) has biased composition (acidic residues). Composition is skewed to pro residues over residues 78-87 (DSPPPEPAPE) and 113-122 (SHPPSRPFRL). The short motif at 122–131 (LPPRLALRLR) is the Nuclear export signal element. 6 consecutive repeat copies span residues 155-157 (ATP), 158-160 (ATP), 161-163 (ATP), 164-166 (ATP), 167-169 (ATP), and 170-172 (ATP). The 6 X 3 AA tandem repeats of A-T-P stretch occupies residues 155–172 (ATPATPATPATPATPATP). Low complexity predominate over residues 158-172 (ATPATPATPATPATP). Positions 172–185 (PARVRFSPHVRVRH) are binding to PP1CA. The interaction with host PPP1CA stretch occupies residues 172 to 185 (PARVRFSPHVRVRH). The segment at 187–245 (VVWASAARLARRGSWARERADRARFRRRVAEAEAVIGPCLGPEARARALARGAGPANSV) is important for interferon resistance. A Bipartite nuclear localization signal motif is present at residues 197 to 215 (RRGSWARERADRARFRRRV). An interaction with host EIF2S1/EIF-2ALPHA region spans residues 215–230 (VAEAEAVIGPCLGPEA).

Belongs to the PPP1R15 family. Interacts with host PPP1CA to form a high-molecular-weight complex that dephosphorylates EIF2S1/eIF-2alpha. Interacts with host EIF2S1/eIF-2alpha; this interaction is crucial for the specific dephosphorylation of EIF2S1/eIF-2alpha by PPP1CA. Binds to proliferating cell nuclear antigen (PCNA), which may release host cells from growth arrest and facilitate viral replication. Interacts (via N-terminus) with host C1QBP and PRKCA. Interacts with protein UL31. Interacts with host TBK1. Interacts with host STING/TMEM173; this interaction inhibits the intracellular DNA sensing pathway. Interacts with host BECN1; this interaction modulates host autophagy.

It is found in the host cytoplasm. The protein resides in the host nucleus. Its subcellular location is the host nucleolus. It localises to the virion. Functionally, inhibits the establishment of the immune response and of the integrated stress response (ISR) in the infected cell. Plays essential roles in viral nuclear egress to mediate capsid transit across the nuclear membrane. Facilitates nuclear egress cooperatively with host C1QBP and protein kinase C/PKC to induce lamin A/C phosphorylation and subsequent reorganization. In turn, lamina disassembles and nuclear egress occurs. Recruits the serine/threonine protein phosphatase PPP1CA/PP1-alpha to dephosphorylate the translation initiation factor EIF2S1/eIF-2alpha, thereby couteracting the host shutoff of protein synthesis involving double-stranded RNA-dependent protein kinase EIF2AK2/PKR. In turn, controls host IRF3 activation and subsequently inhibits host interferon response. Controls the DNA sensing pathway by interacting with and inhibiting host STING/TMEM173. Also down-modulates the host MHC class II proteins cell surface expression. Acts as a neurovirulence factor that has a profound effect on the growth of the virus in central nervous system tissue, by interacting with host BECN1 and thereby antagonizing the host autophagy response. This Homo sapiens (Human) protein is Neurovirulence factor ICP34.5 (RL1).